We begin with the raw amino-acid sequence, 193 residues long: MTDYLLLFVGTVLVNNFVLVKFLGLCPFMGVSKKLETAIGMGFATTFVMTIASISSWLMDTFILVPLDLLYLRTLSFILVIAVVVQFTEMVVRKTSPTLYRLLGIFLPLITTNCAVLGVALLNINQSHTFMQSAVYGFGAAVGFSLVMVLFAAIRERLAVANIPAPFKGSSIGLITAGLMSLAFMGFSGLVKL.

6 consecutive transmembrane segments (helical) span residues 5–25 (LLLF…FLGL), 39–59 (IGMG…SWLM), 62–82 (FILV…LVIA), 102–122 (LLGI…VALL), 134–154 (AVYG…FAAI), and 171–191 (SIGL…SGLV).

This sequence belongs to the NqrDE/RnfAE family. In terms of assembly, the complex is composed of six subunits: RnfA, RnfB, RnfC, RnfD, RnfE and RnfG.

It is found in the cell inner membrane. In terms of biological role, part of a membrane-bound complex that couples electron transfer with translocation of ions across the membrane. The sequence is that of Ion-translocating oxidoreductase complex subunit A from Proteus mirabilis (strain HI4320).